The chain runs to 465 residues: Serine/threonine-protein kinase AtPK1/AtPK6 (465 aa).

The short motif at 91-96 is the LVxCxE motif element; that stretch reads LVECLE. In terms of domain architecture, Protein kinase spans 134 to 389; it reads FEVMKVVGKG…AEEIKQHKWF (256 aa). ATP contacts are provided by residues 140–148 and K163; that span reads VGKGAFGKV. The Proton acceptor role is filled by D257. The tract at residues 275-301 is activation loop; it reads DFGLAKEFEENTRSNSMCGTTEYMAPE. S290 carries the phosphoserine; by PDPK1 modification. Residues 390–460 enclose the AGC-kinase C-terminal domain; sequence KGINWKKLEA…VRPPPSFLHQ (71 aa). At T449 the chain carries Phosphothreonine; by TOR.

This sequence belongs to the protein kinase superfamily. AGC Ser/Thr protein kinase family. S6 kinase subfamily. In terms of assembly, interacts with RAPTOR1. Interacts with RBR1-E2FB complex through its LVxCxE motif. Interacts with TAP46. Binds to MRF1. Undergoes serine-specific autophosphorylation. Phosphorylated at Thr-449 by TOR. Expressed in all tissues.

It localises to the cytoplasm. It is found in the nucleus. The catalysed reaction is L-seryl-[protein] + ATP = O-phospho-L-seryl-[protein] + ADP + H(+). It carries out the reaction L-threonyl-[protein] + ATP = O-phospho-L-threonyl-[protein] + ADP + H(+). Activated by PDK1. Repressed during osmotic stress. Downstream effector of TOR signaling pathway involved in osmotic stress response. Could be involved in the control of plant growth and development. Phosphorylates the ribosomal proteins P14, P16 and S6. Functions as a repressor of cell proliferation and required for maintenance of chromosome stability and ploidy levels through the RBR1-E2F pathway. Mediates the phosphorylation of MRFs (e.g. MRF1). The protein is Serine/threonine-protein kinase AtPK1/AtPK6 of Arabidopsis thaliana (Mouse-ear cress).